A 185-amino-acid polypeptide reads, in one-letter code: Kunitz-type serine protease inhibitor DrTI (185 aa).

Intrachain disulfides connect Cys-44-Cys-89 and Cys-139-Cys-147.

The protein belongs to the protease inhibitor I3 (leguminous Kunitz-type inhibitor) family.

It localises to the secreted. Inhibits bovine trypsin and human plasma kallikrein. This chain is Kunitz-type serine protease inhibitor DrTI, found in Delonix regia (Royal poinciana).